The sequence spans 893 residues: MAELPQSRINERNITSEMRESFLDYAMSVIVSRALPDVRDGLKPVHRRILYGLNEQGMTPDKPYKKSARIVGDVMGKYHPHGDSSIYEAMVRMAQDFSYRYPLVDGQGNFGSMDGDGAAAMRYTEARMTKITLELLRDINKDTIDFIDNYDGNEREPSVLPARFPNLLVNGAAGIAVGMATNIPPHNLTEVIDGVLSLSKNPDITINELMEDIQGPDFPTAGLVLGKSGIRRAYETGRGSIQMRSRAEIEERGGGRQRIVVTEIPFQVNKARMIEKIAELVRDKKIDGITDLRDETSLRTGVRVVIDVRKDANASVILNNLYKQTPLQTSFGVNMIALVNGRPKLINLKEALIHYLEHQKTVVRRRTEYNLKKARDRAHILEGLRIALDHIDEIITTIRESDTDKIAMASLQERFKLTERQAQAILDMRLRRLTGLERDKIESEYNELLEYIKELEEILADEEVLLQLVRDELTEIKERFGDERRTEIQLGGLEDLEDEDLIPEEQIVITLSHNNYIKRLPVSTYRSQNRGGRGIQGMNTLDEDFVSQLVTMSTHDHVLFFTNKGRVYKLKGYEVPELSRQSKGIPIINAIELENDETISTMIAVKDLESEEDYLVFATKQGIVKRSSLSNFSRINKNGKIAINFKEDDELIAVRLTTGNEDILIGTAHASLIRFSESTLRPLGRTAAGVKGISLREGDTVVGLDVADSESEDEVLVVTENGYGKRTPVSEYRLSNRGGKGIKTATITERNGNIVCITTVTGEEDLMVVTNAGVIIRLDVHDISQNGRAAQGVRLMKLGDGQFVSTVAKVNEEDDNEENADEAQQSTTTETADVEEVVDDQTPGNAIHTEGDAEMESVESPENDDRIDIRQDFMDRVNEDIESASDNEEDSDE.

Residues 35-501 enclose the Topo IIA-type catalytic domain; sequence LPDVRDGLKP…GLEDLEDEDL (467 aa). Catalysis depends on tyrosine 123, which acts as the O-(5'-phospho-DNA)-tyrosine intermediate. A GyrA-box motif is present at residues 528 to 534; the sequence is QNRGGRG. The segment at 810 to 893 is disordered; that stretch reads VNEEDDNEEN…ASDNEEDSDE (84 aa). 2 stretches are compositionally biased toward acidic residues: residues 812–821 and 852–862; these read EEDDNEENAD and DAEMESVESPE. Residues 863–879 show a composition bias toward basic and acidic residues; the sequence is NDDRIDIRQDFMDRVNE. The segment covering 880–893 has biased composition (acidic residues); the sequence is DIESASDNEEDSDE.

It belongs to the type II topoisomerase GyrA/ParC subunit family. In terms of assembly, heterotetramer, composed of two GyrA and two GyrB chains. In the heterotetramer, GyrA contains the active site tyrosine that forms a transient covalent intermediate with DNA, while GyrB binds cofactors and catalyzes ATP hydrolysis.

The protein localises to the cytoplasm. It carries out the reaction ATP-dependent breakage, passage and rejoining of double-stranded DNA.. Functionally, a type II topoisomerase that negatively supercoils closed circular double-stranded (ds) DNA in an ATP-dependent manner to modulate DNA topology and maintain chromosomes in an underwound state. Negative supercoiling favors strand separation, and DNA replication, transcription, recombination and repair, all of which involve strand separation. Also able to catalyze the interconversion of other topological isomers of dsDNA rings, including catenanes and knotted rings. Type II topoisomerases break and join 2 DNA strands simultaneously in an ATP-dependent manner. The sequence is that of DNA gyrase subunit A from Staphylococcus epidermidis (strain ATCC 12228 / FDA PCI 1200).